We begin with the raw amino-acid sequence, 217 residues long: Protein GrpE (217 aa).

Positions 1–63 are disordered; that stretch reads MAETSNSENK…AADSELSLQS (63 aa). A compositionally biased stretch (basic and acidic residues) spans 10–32; the sequence is KTSEEAKASEKNSRSITLEETKL. Low complexity predominate over residues 37–63; that stretch reads SEESTQTTESTQAQAAEAADSELSLQS.

It belongs to the GrpE family. As to quaternary structure, homodimer.

Its subcellular location is the cytoplasm. Participates actively in the response to hyperosmotic and heat shock by preventing the aggregation of stress-denatured proteins, in association with DnaK and GrpE. It is the nucleotide exchange factor for DnaK and may function as a thermosensor. Unfolded proteins bind initially to DnaJ; upon interaction with the DnaJ-bound protein, DnaK hydrolyzes its bound ATP, resulting in the formation of a stable complex. GrpE releases ADP from DnaK; ATP binding to DnaK triggers the release of the substrate protein, thus completing the reaction cycle. Several rounds of ATP-dependent interactions between DnaJ, DnaK and GrpE are required for fully efficient folding. The chain is Protein GrpE from Leptospira borgpetersenii serovar Hardjo-bovis (strain JB197).